An 885-amino-acid chain; its full sequence is Alanine--tRNA ligase (885 aa).

Zn(2+) contacts are provided by histidine 574, histidine 578, cysteine 676, and histidine 680.

The protein belongs to the class-II aminoacyl-tRNA synthetase family. Zn(2+) serves as cofactor.

The protein resides in the cytoplasm. It carries out the reaction tRNA(Ala) + L-alanine + ATP = L-alanyl-tRNA(Ala) + AMP + diphosphate. Functionally, catalyzes the attachment of alanine to tRNA(Ala) in a two-step reaction: alanine is first activated by ATP to form Ala-AMP and then transferred to the acceptor end of tRNA(Ala). Also edits incorrectly charged Ser-tRNA(Ala) and Gly-tRNA(Ala) via its editing domain. This chain is Alanine--tRNA ligase, found in Syntrophobacter fumaroxidans (strain DSM 10017 / MPOB).